A 181-amino-acid polypeptide reads, in one-letter code: Diphosphoinositol polyphosphate phosphohydrolase NUDT4B (181 aa).

Substrate contacts are provided by residues Arg-10, 18–20 (KKR), and 39–41 (SSR). Residues 18 to 145 (KKRAACLCFR…VHAEYLEKLK (128 aa)) enclose the Nudix hydrolase domain. 2 residues coordinate Mg(2+): Gly-50 and Glu-66. The Nudix box motif lies at 51-72 (GGMEPEEEPGGAAVREVYEEAG). Residue Glu-69 is the Proton acceptor of the active site. Glu-70 contributes to the Mg(2+) binding site. Residues 90-92 (RKH), Arg-116, and Lys-134 each bind substrate.

It belongs to the Nudix hydrolase family. DIPP subfamily. Requires Mg(2+) as cofactor. The cofactor is Mn(2+).

It is found in the cytoplasm. It carries out the reaction diphospho-myo-inositol polyphosphate + H2O = myo-inositol polyphosphate + phosphate.. In terms of biological role, cleaves a beta-phosphate from the diphosphate groups in PP-InsP5 (diphosphoinositol pentakisphosphate), PP-InsP4 and [PP]2-InsP4 (bisdiphosphoinositol tetrakisphosphate), suggesting that it may play a role in signal transduction. Also able to catalyze the hydrolysis of dinucleoside oligophosphate Ap6A, but not Ap5A. The major reaction products are ADP and p4a from Ap6A. Also able to hydrolyze 5-phosphoribose 1-diphosphate. Does not play a role in U8 snoRNA decapping activity. Binds U8 snoRNA. This is Diphosphoinositol polyphosphate phosphohydrolase NUDT4B from Homo sapiens (Human).